The chain runs to 327 residues: Sphingomyelin synthase-related 2 (327 aa).

Transmembrane regions (helical) follow at residues 54 to 74 (LLATAMVGVGWLSNEVALAWV), 99 to 119 (AIRIAEYIMMILLISALLVMF), 131 to 151 (VFFCIAMAYSFRALCVTIFQV), 192 to 212 (LCGDLIVSGHTLTIFTAFLVF), and 220 to 240 (LQPLSHIYHVLAFTALFSILL). The active site involves H201. Over 241 to 327 (ARKHYMIDIV…TLKKSRRSFE (87 aa)) the chain is Cytoplasmic. Residues H244 and D248 contribute to the active site.

This sequence belongs to the sphingomyelin synthase family.

The protein resides in the membrane. The chain is Sphingomyelin synthase-related 2 from Caenorhabditis elegans.